Consider the following 467-residue polypeptide: Serine/threonine-protein phosphatase 2A 56 kDa regulatory subunit epsilon isoform (467 aa).

Residues 1 to 39 (MSSAPTTPPSVDKVDGFSRKSVRKARQKRSQSSSQFRSQ) are disordered. Ser2 carries the N-acetylserine modification. The residue at position 7 (Thr7) is a Phosphothreonine. The span at 20 to 29 (KSVRKARQKR) shows a compositional bias: basic residues. Phosphoserine occurs at positions 30, 32, and 34. Low complexity predominate over residues 30-39 (SQSSSQFRSQ).

It belongs to the phosphatase 2A regulatory subunit B56 family. PP2A consists of a common heterodimeric core enzyme, composed of a 36 kDa catalytic subunit (subunit C) and a 65 kDa constant regulatory subunit (PR65 or subunit A), that associates with a variety of regulatory subunits. Proteins that associate with the core dimer include three families of regulatory subunits B (the R2/B/PR55/B55, R3/B''/PR72/PR130/PR59 and R5/B'/B56 families), the 48 kDa variable regulatory subunit, viral proteins, and cell signaling molecules. Interacts with SGO1. Found in a complex with at least ARL2, PPP2CB; PPP2R1A, PPP2R2A, PPP2R5E and TBCD.

It is found in the cytoplasm. Functionally, the B regulatory subunit might modulate substrate selectivity and catalytic activity, and might also direct the localization of the catalytic enzyme to a particular subcellular compartment. Interacts with cyclin G in vitro. This chain is Serine/threonine-protein phosphatase 2A 56 kDa regulatory subunit epsilon isoform (Ppp2r5e), found in Mus musculus (Mouse).